The chain runs to 712 residues: Cadherin-13 (712 aa).

An N-terminal signal peptide occupies residues Met-1–Ala-22. Residues Glu-23–Arg-138 constitute a propeptide that is removed on maturation. An N-linked (GlcNAc...) asparagine glycan is attached at Asn-86. Cadherin domains follow at residues Thr-143–Phe-245, Lys-246–Phe-363, Thr-364–Phe-477, His-478–Leu-585, and Tyr-586–Cys-680. N-linked (GlcNAc...) asparagine glycans are attached at residues Asn-382, Asn-500, Asn-530, Asn-638, and Asn-671. Asp-693 carries the GPI-anchor amidated aspartate lipid modification. A propeptide spans Ala-694 to Leu-712 (removed in mature form).

As to quaternary structure, by contrast to classical cadherins, homodimerization in trans is not mediated by cadherin EC1 domain strand-swapping, but instead through a homophilic adhesive interface which joins two elongated EC1-EC2 domains through a region near their Ca2+-binding sites to form a tetrahedral, X-like shape. Neural tissues. Also found in muscles; kidney and retina.

It is found in the cell membrane. The protein localises to the cytoplasm. Functionally, cadherins are calcium-dependent cell adhesion proteins. They preferentially interact with themselves in a homophilic manner in connecting cells; cadherins may thus contribute to the sorting of heterogeneous cell types. May act as a negative regulator of neural cell growth. The protein is Cadherin-13 (CDH13) of Gallus gallus (Chicken).